The primary structure comprises 189 residues: Protein GrpE (189 aa).

Residues 1–37 are disordered; sequence MSDSSKEKKKKFADMVSRQKGDDQQSDNHKQTDDLNE. Over residues 17–33 the composition is skewed to basic and acidic residues; sequence SRQKGDDQQSDNHKQTD.

Belongs to the GrpE family. In terms of assembly, homodimer.

Its subcellular location is the cytoplasm. Participates actively in the response to hyperosmotic and heat shock by preventing the aggregation of stress-denatured proteins, in association with DnaK and GrpE. It is the nucleotide exchange factor for DnaK and may function as a thermosensor. Unfolded proteins bind initially to DnaJ; upon interaction with the DnaJ-bound protein, DnaK hydrolyzes its bound ATP, resulting in the formation of a stable complex. GrpE releases ADP from DnaK; ATP binding to DnaK triggers the release of the substrate protein, thus completing the reaction cycle. Several rounds of ATP-dependent interactions between DnaJ, DnaK and GrpE are required for fully efficient folding. This is Protein GrpE from Wolbachia sp. subsp. Drosophila simulans (strain wRi).